The primary structure comprises 26 residues: uncharacterized protein (26 aa).

The protein resides in the plastid. Its subcellular location is the chloroplast. This is an uncharacterized protein from Trieres chinensis (Marine centric diatom).